Here is a 543-residue protein sequence, read N- to C-terminus: Excitatory amino acid transporter 1 (543 aa).

Residues 1-47 (MTKSNGEEPRMGGRMERLQQGVRKRTLLAKKKVQSLTKEDVKSYLFR) are Cytoplasmic-facing. A helical transmembrane segment spans residues 48 to 68 (NAFVLLTVTAVIVGTILGFAL). At 69-86 (RPYKMSYREVKYFSFPGE) the chain is on the extracellular side. Residues 87-108 (LLMRMLQMLVLPLIISSLVTGM) traverse the membrane as a helical segment. Over 109–122 (AALDSKASGKMGMR) the chain is Cytoplasmic. Residues 123–145 (AVVYYMTTTIIAVVIGIIIVIII) form a helical membrane-spanning segment. The Extracellular segment spans residues 146 to 236 (HPGKGTKENM…IREEMVPVPG (91 aa)). Residues asparagine 206 and asparagine 216 are each glycosylated (N-linked (GlcNAc...) asparagine). A helical membrane pass occupies residues 237–260 (SVNGVNALGLVVFSMCFGFVIGNM). Over 261-269 (KEQGQALRE) the chain is Cytoplasmic. The chain crosses the membrane as a helical span at residues 270 to 297 (FFDSLNEAIMRLVAVIMWYAPLGILFLI). The Extracellular segment spans residues 298–318 (AGKIVEMEDMGVIGGQLAMYT). The helical transmembrane segment at 319-340 (VTVIVGLLIHAVIVLPLLYFLV) threads the bilayer. Over 341 to 345 (TRKNP) the chain is Cytoplasmic. The discontinuously helical intramembrane region spans 346–376 (WVFIGGLLQALITALGTSSSSATLPITFKCL). 363–365 (SSS) serves as a coordination point for L-aspartate. Residues 377-385 (EENNGVDKR) lie on the Cytoplasmic side of the membrane. The helical transmembrane segment at 386–412 (ITRFVLPVGATINMDGTALYEALAAIF) threads the bilayer. Residues glycine 394, threonine 396, and asparagine 398 each contribute to the Na(+) site. Residue threonine 402 coordinates L-aspartate. Residues 413 to 425 (IAQVNNFDLNFGQ) are Extracellular-facing. The discontinuously helical intramembrane region spans 426–459 (IITISITATAASIGAAGIPQAGLVTMVIVLTSVG). 443–447 (IPQAG) serves as a coordination point for L-aspartate. Residues 460–472 (LPTDDITLIIAVD) are Extracellular-facing. Residues 473–494 (WFLDRLRTTTNVLGDSLGAGIV) form a helical membrane-spanning segment. L-aspartate is bound by residues aspartate 476 and asparagine 483. Positions 483 and 487 each coordinate Na(+). The Cytoplasmic segment spans residues 495 to 543 (EHLSRHELKNRDVEMGNSVIEENEMKKPYQLIAQDNEPEKPVADSETKM). The residue at position 512 (serine 512) is a Phosphoserine. The tract at residues 522–543 (PYQLIAQDNEPEKPVADSETKM) is disordered. Over residues 531-543 (EPEKPVADSETKM) the composition is skewed to basic and acidic residues.

It belongs to the dicarboxylate/amino acid:cation symporter (DAACS) (TC 2.A.23) family. SLC1A3 subfamily. In terms of assembly, homotrimer. In terms of processing, glycosylated. Detected in brain, in Bergmann glia arborising into the molecular layer of the cerebellum (at protein level). Localized in brain and is highly enriched in the Purkinje cell layer in cerebellum. Intermediate level in lung, low level in spleen, skeletal muscle and testis.

The protein localises to the cell membrane. It carries out the reaction K(+)(in) + L-glutamate(out) + 3 Na(+)(out) + H(+)(out) = K(+)(out) + L-glutamate(in) + 3 Na(+)(in) + H(+)(in). It catalyses the reaction K(+)(in) + L-aspartate(out) + 3 Na(+)(out) + H(+)(out) = K(+)(out) + L-aspartate(in) + 3 Na(+)(in) + H(+)(in). The enzyme catalyses D-aspartate(out) + K(+)(in) + 3 Na(+)(out) + H(+)(out) = D-aspartate(in) + K(+)(out) + 3 Na(+)(in) + H(+)(in). Functionally, sodium-dependent, high-affinity amino acid transporter that mediates the uptake of L-glutamate and also L-aspartate and D-aspartate. Functions as a symporter that transports one amino acid molecule together with two or three Na(+) ions and one proton, in parallel with the counter-transport of one K(+) ion. Plays a redundant role in the rapid removal of released glutamate from the synaptic cleft, which is essential for terminating the postsynaptic action of glutamate. This is Excitatory amino acid transporter 1 (Slc1a3) from Mus musculus (Mouse).